We begin with the raw amino-acid sequence, 199 residues long: Glycerol-3-phosphate acyltransferase (199 aa).

The next 5 helical transmembrane spans lie at 3–23 (AAVWTLLLAYLFGSIPAGVLV), 50–70 (WGPALVVAFFDVFKGGIAVLV), 78–98 (DWMLGGVALMAVLGHNYSVFL), 113–133 (LLFLDPALALWTFPIGLSVIL), and 154–174 (LALGRPLWEVATVFLMALLIF).

The protein belongs to the PlsY family. Probably interacts with PlsX.

The protein localises to the cell inner membrane. It carries out the reaction an acyl phosphate + sn-glycerol 3-phosphate = a 1-acyl-sn-glycero-3-phosphate + phosphate. It functions in the pathway lipid metabolism; phospholipid metabolism. Functionally, catalyzes the transfer of an acyl group from acyl-phosphate (acyl-PO(4)) to glycerol-3-phosphate (G3P) to form lysophosphatidic acid (LPA). This enzyme utilizes acyl-phosphate as fatty acyl donor, but not acyl-CoA or acyl-ACP. The chain is Glycerol-3-phosphate acyltransferase from Thermus thermophilus (strain ATCC BAA-163 / DSM 7039 / HB27).